Consider the following 213-residue polypeptide: Putative protein Brevis radix-like 3 (213 aa).

The tract at residues 7-27 is disordered; that stretch reads CSSKEGGEDGSRGAATPHGRD. In terms of domain architecture, BRX spans 158–213; sequence REWTAQVEPGVQITFVTLPGGGNDLKRIRFSRERFGEDRAKVWWEHNRDRIQAQYL.

Belongs to the BRX family.

The protein resides in the nucleus. The polypeptide is Putative protein Brevis radix-like 3 (BRXL3) (Oryza sativa subsp. japonica (Rice)).